A 338-amino-acid polypeptide reads, in one-letter code: Solute carrier family 35 member G5 (338 aa).

The interval M1–H28 is disordered. Helical transmembrane passes span T37 to L57, L67 to L87, C105 to V125, C160 to L180, A190 to Y210, T221 to L241, L250 to V270, L281 to L301, and I310 to C330. Residues L49–G174 form the EamA 1 domain. In terms of domain architecture, EamA 2 spans Y272–A325.

The protein belongs to the SLC35G solute transporter family.

It localises to the membrane. The polypeptide is Solute carrier family 35 member G5 (SLC35G5) (Gorilla gorilla gorilla (Western lowland gorilla)).